The following is a 7524-amino-acid chain: Mucin-19 (7524 aa).

Residues 1 to 20 (MKLILLYLAVVLCFVGKGAA) form the signal peptide. The segment at 20 to 47 (ARSPTTTRTPTPSTSEKASHVPEATPTY) is disordered. Over residues 21–34 (RSPTTTRTPTPSTS) the composition is skewed to low complexity. The 171-residue stretch at 55–225 (GEATMWGKDK…VCEDGVQYCD (171 aa)) folds into the VWFD 1 domain. Cysteines 79 and 224 form a disulfide. The 56-residue stretch at 298-353 (CPGKHIYKECGPSNPPTCSNVAPFQDSECVSGCTCPEGYLLDDIGEKGKCVLKEKC) folds into the TIL domain. VWFD domains lie at 392–568 (GICK…EGSP) and 851–1025 (STCH…QECS). Disulfide bonds link C394/C529, C434/C442, C853/C989, C875/C1024, C884/C986, and C900/C907. Low complexity predominate over residues 1244–1261 (AAATRASSSTSGSVETSV). Disordered regions lie at residues 1244 to 7217 (AAAT…SSLA) and 7249 to 7297 (SVIK…CPDS). Residues 1262-1289 (PATTSTSKAQAHITTASSTETSALNSTA) are compositionally biased toward polar residues. Composition is skewed to low complexity over residues 1320–7099 (PAVS…AGSG) and 7112–7217 (STSG…SSLA). Repeat copies occupy residues 1321–1483 (AVST…TTGP), 1484–1646 (AVST…TTGP), 1647–1809 (AVST…TTGP), 1810–1972 (AVST…TTGP), 1973–2135 (AVST…TTGP), 2136–2298 (AVST…TTGP), 2299–2461 (AVST…TTGP), 2462–2624 (AVST…TTGP), 2625–2787 (AVST…TTGP), 2788–2950 (AVST…TTGP), 2951–3113 (AVST…TTGP), 3114–3276 (AVST…TTGP), 3277–3439 (AVST…TTGP), 3440–3602 (AVST…TTGP), 3603–3765 (AVST…TTGP), 3766–3928 (AVST…TTGP), 3929–4091 (AVST…TTGP), 4092–4254 (AVST…TTGP), 4255–4417 (AVST…TTGP), 4418–4580 (AVST…TTGP), 4581–4743 (AVST…TTGP), 4744–4906 (AVST…TTGP), 4907–5069 (AVST…TTGP), 5070–5232 (AVST…TTGP), 5233–5395 (AVST…TTGP), 5396–5558 (AVST…TTGP), 5559–5721 (AVST…TTGP), 5722–5884 (AVST…TTGP), 5885–6047 (AVST…TTGP), 6048–6210 (AVST…TTGP), 6211–6373 (AVST…TTGP), 6374–6536 (AVST…TTGP), 6537–6699 (AVST…TTGP), 6700–6862 (AVST…TTGP), 6863–7025 (AVST…TTGP), and 7026–7188 (AVST…TTGP). The segment at 1321–7188 (AVSTTSAGST…AETAGSTTGP (5868 aa)) is approximate repeats. Over residues 7261-7291 (AKSNETTGRTTSMPASTSVAPGVTTSPNISQ) the composition is skewed to polar residues. VWFC domains follow at residues 7302–7368 (PVCH…GHCE) and 7370–7432 (RTCL…YKCK). 4 disulfide bridges follow: C7435–C7482, C7449–C7496, C7458–C7512, and C7462–C7514. A CTCK domain is found at 7435 to 7519 (CRTTPVNVTV…TTCSCRDQCE (85 aa)).

Specifically expressed in sublingual salivary glands. Expressed by mucous cells of the submandibular gland and submucosal gland of the trachea. Expression is altered in sld (sublingual gland differentiation arrest) mutants.

It localises to the secreted. Functionally, may function in ocular mucus homeostasis. The polypeptide is Mucin-19 (Muc19) (Mus musculus (Mouse)).